The primary structure comprises 307 residues: tRNA pseudouridine synthase B (307 aa).

The active-site Nucleophile is the aspartate 45.

Belongs to the pseudouridine synthase TruB family. Type 1 subfamily.

It carries out the reaction uridine(55) in tRNA = pseudouridine(55) in tRNA. In terms of biological role, responsible for synthesis of pseudouridine from uracil-55 in the psi GC loop of transfer RNAs. This chain is tRNA pseudouridine synthase B, found in Heliobacterium mobile (Heliobacillus mobilis).